Consider the following 184-residue polypeptide: Large ribosomal subunit protein uL6 (184 aa).

This sequence belongs to the universal ribosomal protein uL6 family. Part of the 50S ribosomal subunit.

Its function is as follows. This protein binds to the 23S rRNA, and is important in its secondary structure. It is located near the subunit interface in the base of the L7/L12 stalk, and near the tRNA binding site of the peptidyltransferase center. The sequence is that of Large ribosomal subunit protein uL6 from Pyrococcus furiosus (strain ATCC 43587 / DSM 3638 / JCM 8422 / Vc1).